Reading from the N-terminus, the 188-residue chain is Large ribosomal subunit protein eL18 (188 aa).

The tract at residues 153–188 (GKAPGTPHSHTKPYIRSKGRKFERARGRRASRGYKN) is disordered. Composition is skewed to basic residues over residues 161–171 (SHTKPYIRSKG) and 178–188 (RGRRASRGYKN).

It belongs to the eukaryotic ribosomal protein eL18 family. As to quaternary structure, component of the large ribosomal subunit.

The protein resides in the cytoplasm. It is found in the cytosol. The protein localises to the rough endoplasmic reticulum. In terms of biological role, component of the large ribosomal subunit. The ribosome is a large ribonucleoprotein complex responsible for the synthesis of proteins in the cell. This is Large ribosomal subunit protein eL18 (rpl18) from Ictalurus punctatus (Channel catfish).